A 132-amino-acid chain; its full sequence is Small ribosomal subunit protein uS8 (132 aa).

The protein belongs to the universal ribosomal protein uS8 family. As to quaternary structure, part of the 30S ribosomal subunit. Contacts proteins S5 and S12.

Its function is as follows. One of the primary rRNA binding proteins, it binds directly to 16S rRNA central domain where it helps coordinate assembly of the platform of the 30S subunit. The chain is Small ribosomal subunit protein uS8 from Saccharopolyspora erythraea (strain ATCC 11635 / DSM 40517 / JCM 4748 / NBRC 13426 / NCIMB 8594 / NRRL 2338).